The sequence spans 115 residues: Cholecystokinin (115 aa).

The first 20 residues, 1–20, serve as a signal peptide directing secretion; it reads MNSGVCLCVLMAVLAAGALT. Residues 21–44 constitute a propeptide that is removed on maturation; the sequence is QPVPPADPAGSGLQRAEEAPRRQL. Residues 23-52 are disordered; the sequence is VPPADPAGSGLQRAEEAPRRQLRVSQRTDG. A glycan (O-linked (Xyl...) (chondroitin sulfate) serine) is linked at S31. Residue Y97 is modified to Sulfotyrosine. F103 is modified (phenylalanine amide). Positions 107 to 115 are excised as a propeptide; it reads SAEEYEYPS. Sulfotyrosine is present on residues Y111 and Y113.

This sequence belongs to the gastrin/cholecystokinin family. Binds to CCK-A receptors in the pancreas and CCK-B receptors in the brain. In terms of processing, the precursor is cleaved by proteases to produce a number of active cholecystokinins. Post-translationally, the precursor is cleaved by ACE, which removes the Gly-Arg-Arg peptide at the C-terminus, leading to mature hormone. As to expression, detected in cerebrospinal fluid and urine (at protein level).

The protein localises to the secreted. In terms of biological role, this peptide hormone induces gall bladder contraction and the release of pancreatic enzymes in the gut. Its function in the brain is not clear. Binding to CCK-A receptors stimulates amylase release from the pancreas, binding to CCK-B receptors stimulates gastric acid secretion. This Homo sapiens (Human) protein is Cholecystokinin (CCK).